A 344-amino-acid polypeptide reads, in one-letter code: tRNA N6-adenosine threonylcarbamoyltransferase (344 aa).

The Fe cation site is built by His111 and His115. Residues 133-137, Asp166, Gly179, and Asn283 each bind substrate; that span reads LVSGG. Fe cation is bound at residue Asp311.

It belongs to the KAE1 / TsaD family. Fe(2+) is required as a cofactor.

Its subcellular location is the cytoplasm. It carries out the reaction L-threonylcarbamoyladenylate + adenosine(37) in tRNA = N(6)-L-threonylcarbamoyladenosine(37) in tRNA + AMP + H(+). Its function is as follows. Required for the formation of a threonylcarbamoyl group on adenosine at position 37 (t(6)A37) in tRNAs that read codons beginning with adenine. Is involved in the transfer of the threonylcarbamoyl moiety of threonylcarbamoyl-AMP (TC-AMP) to the N6 group of A37, together with TsaE and TsaB. TsaD likely plays a direct catalytic role in this reaction. The protein is tRNA N6-adenosine threonylcarbamoyltransferase of Orientia tsutsugamushi (strain Ikeda) (Rickettsia tsutsugamushi).